We begin with the raw amino-acid sequence, 135 residues long: Probable transporter XF_0766 (135 aa).

Transmembrane regions (helical) follow at residues 4 to 24 (YWYP…LLLL), 45 to 65 (AQDI…SVIF), 71 to 91 (VTVA…GLGT), and 114 to 134 (IVAT…MGVY).

Belongs to the TsuA/YedE (TC 9.B.102) family.

The protein resides in the cell inner membrane. This is Probable transporter XF_0766 from Xylella fastidiosa (strain 9a5c).